The chain runs to 217 residues: Phosphatidylserine decarboxylase proenzyme (217 aa).

Residue Ser187 is the Schiff-base intermediate with substrate; via pyruvic acid of the active site. At Ser187 the chain carries Pyruvic acid (Ser); by autocatalysis.

It belongs to the phosphatidylserine decarboxylase family. PSD-A subfamily. As to quaternary structure, heterodimer of a large membrane-associated beta subunit and a small pyruvoyl-containing alpha subunit. The cofactor is pyruvate. Post-translationally, is synthesized initially as an inactive proenzyme. Formation of the active enzyme involves a self-maturation process in which the active site pyruvoyl group is generated from an internal serine residue via an autocatalytic post-translational modification. Two non-identical subunits are generated from the proenzyme in this reaction, and the pyruvate is formed at the N-terminus of the alpha chain, which is derived from the carboxyl end of the proenzyme. The post-translation cleavage follows an unusual pathway, termed non-hydrolytic serinolysis, in which the side chain hydroxyl group of the serine supplies its oxygen atom to form the C-terminus of the beta chain, while the remainder of the serine residue undergoes an oxidative deamination to produce ammonia and the pyruvoyl prosthetic group on the alpha chain.

The protein resides in the cell membrane. It carries out the reaction a 1,2-diacyl-sn-glycero-3-phospho-L-serine + H(+) = a 1,2-diacyl-sn-glycero-3-phosphoethanolamine + CO2. The protein operates within phospholipid metabolism; phosphatidylethanolamine biosynthesis; phosphatidylethanolamine from CDP-diacylglycerol: step 2/2. Catalyzes the formation of phosphatidylethanolamine (PtdEtn) from phosphatidylserine (PtdSer). This Thermobifida fusca (strain YX) protein is Phosphatidylserine decarboxylase proenzyme.